The sequence spans 414 residues: Cell division protein FtsA (414 aa).

Belongs to the FtsA/MreB family. As to quaternary structure, self-interacts. Interacts with FtsZ.

The protein localises to the cell inner membrane. Its function is as follows. Cell division protein that is involved in the assembly of the Z ring. May serve as a membrane anchor for the Z ring. The sequence is that of Cell division protein FtsA from Neisseria meningitidis serogroup B (strain ATCC BAA-335 / MC58).